The following is a 448-amino-acid chain: Probable rhamnogalacturonase E (448 aa).

The first 22 residues, 1-22 (MTWSTSFLVATSLLSIINSVHA), serve as a signal peptide directing secretion. Residues C43 and C69 are joined by a disulfide bond. N-linked (GlcNAc...) asparagine glycosylation is found at N54, N92, and N131. The active-site Proton donor is D221. A disulfide bridge links C223 with C240. N-linked (GlcNAc...) asparagine glycans are attached at residues N256 and N284. H296 is a catalytic residue. N-linked (GlcNAc...) asparagine glycosylation is found at N323 and N328. Cystine bridges form between C346-C352 and C374-C382.

Belongs to the glycosyl hydrolase 28 family.

Its subcellular location is the secreted. In terms of biological role, pectinolytic enzymes consist of four classes of enzymes: pectine lyase, polygalacturonase, pectin methylesterase and rhamnogalacturonase. Hydrolyzes alpha-D-galacturonopyranosyl-(1,2)-alpha-L-rhamnopyranosyl linkages in the backbone of the hairy regions of pectins. The chain is Probable rhamnogalacturonase E (rhgE) from Aspergillus niger (strain ATCC MYA-4892 / CBS 513.88 / FGSC A1513).